We begin with the raw amino-acid sequence, 129 residues long: Large ribosomal subunit protein bL12c (129 aa).

This sequence belongs to the bacterial ribosomal protein bL12 family. Homodimer. Part of the ribosomal stalk of the 50S ribosomal subunit. Forms a multimeric L10(L12)X complex, where L10 forms an elongated spine to which 2 to 4 L12 dimers bind in a sequential fashion. Binds GTP-bound translation factors.

It localises to the plastid. The protein localises to the chloroplast. Forms part of the ribosomal stalk which helps the ribosome interact with GTP-bound translation factors. Is thus essential for accurate translation. This Pyropia yezoensis (Susabi-nori) protein is Large ribosomal subunit protein bL12c.